Reading from the N-terminus, the 408-residue chain is Protein ZNF365 (408 aa).

Position 16 is a phosphoserine (S16). The segment at 26–51 (FRCPRCGDHTRFRSLSSLRAHLEFSH) adopts a C2H2-type; degenerate zinc-finger fold. Phosphoserine occurs at positions 139 and 146. Residues 170 to 298 (VEAVDRTIEK…QLEYYQSQQA (129 aa)) are a coiled coil. A Phosphothreonine modification is found at T176. At S370 the chain carries Phosphoserine.

In terms of assembly, homodimer. Interacts with NDE1 and NDEL1. Interacts with DISC1. Interacts with PARP1. Interacts with MCRS1. As to expression, detected in several tissues, with highest levels in brain. Also expressed during embryonic development. Expressed in cerebral cortex, hippocampus, striatum, inferior colliculus and thalamus.

It is found in the cytoplasm. Its subcellular location is the cytoskeleton. It localises to the microtubule organizing center. The protein resides in the centrosome. Its function is as follows. Contributes to genomic stability by preventing telomere dysfunction. Involved in the morphogenesis of basket cells in the somatosensory cortex during embryogenesis. Involved in the positive regulation of oligodendrocyte differentiation during postnatal growth. Involved in dendritic arborization, morphogenesis of spine density dendrite, and establishment of postsynaptic dendrite density in cortical pyramidal neurons. Involved in the regulation of neurogenesis. Negatively regulates neurite outgrowth. Involved in homologous recombination (HR) repair pathway. Required for proper resolution of DNA double-strand breaks (DSBs) by HR. Is required for recovery of stalled replication forks, and directly contributes to genomic stability. Interacts with PARP1 and mediates MRE11-dependent DNA end resection during replication fork recovery. This chain is Protein ZNF365 (Znf365), found in Mus musculus (Mouse).